The sequence spans 237 residues: RING-H2 finger protein ATL57 (237 aa).

Residues 51–71 form a helical membrane-spanning segment; it reads ALTIFILLVALFFMGFFSVYF. An RING-type; atypical zinc finger spans residues 140–182; that stretch reads CVICLSDFEEGETVKVIPHCGHVFHVDCVDTWLSSYVTCPLCR.

It belongs to the RING-type zinc finger family. ATL subfamily.

It is found in the membrane. It catalyses the reaction S-ubiquitinyl-[E2 ubiquitin-conjugating enzyme]-L-cysteine + [acceptor protein]-L-lysine = [E2 ubiquitin-conjugating enzyme]-L-cysteine + N(6)-ubiquitinyl-[acceptor protein]-L-lysine.. Its pathway is protein modification; protein ubiquitination. In Arabidopsis thaliana (Mouse-ear cress), this protein is RING-H2 finger protein ATL57 (ATL57).